We begin with the raw amino-acid sequence, 301 residues long: Phosducin-like protein (301 aa).

N-acetylthreonine is present on threonine 2. Residues 17 to 60 (YSTSEDEDSDHEDKDRGRGAPAISSTPAEAELAGEGISINTGPK) are disordered. Residues serine 20, serine 25, serine 226, serine 293, and serine 296 each carry the phosphoserine modification. Residues 36–299 (APAISSTPAE…TCHSEDSDLE (264 aa)) form the Phosducin domain. The thioredoxin fold stretch occupies residues 158 to 301 (FKQVFEIPSG…HSEDSDLEID (144 aa)).

This sequence belongs to the phosducin family. Forms a complex with the beta and gamma subunits of the GTP-binding protein, transducin. Interacts with the CCT chaperonin complex.

Its subcellular location is the cell projection. It localises to the cilium. Its function is as follows. Functions as a co-chaperone for CCT in the assembly of heterotrimeric G protein complexes, facilitates the assembly of both Gbeta-Ggamma and RGS-Gbeta5 heterodimers. Also acts as a positive regulator of hedgehog signaling and regulates ciliary function. The protein is Phosducin-like protein (Pdcl) of Mus musculus (Mouse).